The sequence spans 682 residues: Transcription factor 12 (682 aa).

The 9aaTAD signature appears at 19–27 (DLLDFSAMF). 3 disordered regions span residues 25–122 (AMFS…LYSR), 140–219 (LGSP…PPTS), and 281–313 (SVSP…ASHT). Polar residues-rich tracts occupy residues 30–48 (PVNS…QFSG) and 56–76 (GTTS…SRGF). Residues Ser-47, Ser-67, and Ser-79 each carry the phosphoserine modification. Residues 81–93 (HYSDHLNDSRLGA) show a composition bias toward basic and acidic residues. Ser-98 carries the phosphoserine modification. Polar residues-rich tracts occupy residues 101 to 121 (PFMN…SLYS) and 144 to 163 (AQLS…SATS). Residue Lys-110 forms a Glycyl lysine isopeptide (Lys-Gly) (interchain with G-Cter in SUMO2) linkage. Position 116 is a phosphoserine (Ser-116). Residues 119-140 (LYSRDTGLPGCQSSLLRQDLGL) are leucine-zipper. Lys-181 is covalently cross-linked (Glycyl lysine isopeptide (Lys-Gly) (interchain with G-Cter in SUMO2)). Residues 182–196 (KVRKVPPGLPSSVYA) form an interaction with RUNX1T1 region. Residues 282–306 (VSPTDINTSLPPMSSFHRGSTSSSP) are compositionally biased toward polar residues. The residue at position 313 (Thr-313) is a Phosphothreonine. Residue Ser-333 is modified to Phosphoserine. 2 disordered regions span residues 349 to 395 (PDHT…SLHS) and 462 to 580 (SASM…ERRM). Low complexity predominate over residues 352 to 363 (TSSSFPSNPSTP). Composition is skewed to polar residues over residues 364–376 (VGSP…TSQW) and 383–395 (APSS…SLHS). A compositionally biased stretch (low complexity) spans 481–492 (SVLSSTVTTSST). The segment covering 506-517 (LQSQSGTVVTTE) has biased composition (polar residues). Composition is skewed to basic and acidic residues over residues 518–530 (IKTE…ENLH) and 536–551 (DDMK…DIKV). A Glycyl lysine isopeptide (Lys-Gly) (interchain with G-Cter in SUMO2) cross-link involves residue Lys-519. Ser-540 carries the phosphoserine modification. Residue Lys-550 forms a Glycyl lysine isopeptide (Lys-Gly) (interchain with G-Cter in SUMO2) linkage. A Phosphothreonine modification is found at Thr-557. Ser-558 and Ser-559 each carry phosphoserine. Residues 568–580 (PEQKIEREKERRM) show a composition bias toward basic and acidic residues. Residues 577-630 (ERRMANNARERLRVRDINEAFKELGRMCQLHLKSEKPQTKLLILHQAVAVILSL) form the bHLH domain. Glycyl lysine isopeptide (Lys-Gly) (interchain with G-Cter in SUMO2) cross-links involve residues Lys-609 and Lys-653. The class A specific domain stretch occupies residues 632–655 (QQVRERNLNPKAACLKRREEEKVS). The interval 651-682 (EEKVSAVSAEPPTTLPGTHPGLSETTNPMGHM) is disordered. Low complexity predominate over residues 661-672 (PPTTLPGTHPGL). Residues 673 to 682 (SETTNPMGHM) are compositionally biased toward polar residues.

In terms of assembly, efficient DNA binding requires dimerization with another bHLH protein. Forms homo- or heterooligomers with myogenin, E12 and ITF2 proteins. Interacts with PTF1A. Interacts with NEUROD2. Interacts with RUNX1T1. Interacts with AML1-MTG8/ETO (via nervy homology region 2 in oligomerized form). Interacts with BHLHA9. In terms of tissue distribution, expressed in several tissues and cell types including skeletal muscle, thymus, and a B-cell line.

The protein localises to the nucleus. Transcriptional regulator. Involved in the initiation of neuronal differentiation. Activates transcription by binding to the E box (5'-CANNTG-3'). May be involved in the functional network that regulates the development of the GnRH axis. The sequence is that of Transcription factor 12 (TCF12) from Homo sapiens (Human).